The sequence spans 152 residues: Deoxyuridine 5'-triphosphate nucleotidohydrolase (152 aa).

Substrate-binding positions include 65–67, Asn-78, and 82–84; these read RSG and TID.

It belongs to the dUTPase family. Mg(2+) is required as a cofactor.

The catalysed reaction is dUTP + H2O = dUMP + diphosphate + H(+). Its pathway is pyrimidine metabolism; dUMP biosynthesis; dUMP from dCTP (dUTP route): step 2/2. Functionally, this enzyme is involved in nucleotide metabolism: it produces dUMP, the immediate precursor of thymidine nucleotides and it decreases the intracellular concentration of dUTP so that uracil cannot be incorporated into DNA. The chain is Deoxyuridine 5'-triphosphate nucleotidohydrolase from Chlorobaculum tepidum (strain ATCC 49652 / DSM 12025 / NBRC 103806 / TLS) (Chlorobium tepidum).